A 164-amino-acid polypeptide reads, in one-letter code: Peptidyl-prolyl cis-trans isomerase A-like 4H (164 aa).

The PPIase cyclophilin-type domain maps to 7-163 (FFDITVDGKP…KKITIADCGQ (157 aa)). Residues N71 and N108 are each glycosylated (N-linked (GlcNAc...) asparagine).

The protein belongs to the cyclophilin-type PPIase family. PPIase A subfamily.

The protein resides in the cytoplasm. It carries out the reaction [protein]-peptidylproline (omega=180) = [protein]-peptidylproline (omega=0). PPIases accelerate the folding of proteins. It catalyzes the cis-trans isomerization of proline imidic peptide bonds in oligopeptides. This Homo sapiens (Human) protein is Peptidyl-prolyl cis-trans isomerase A-like 4H.